The following is a 349-amino-acid chain: Anthranilate phosphoribosyltransferase (349 aa).

Residues Gly-82, 85–86 (GD), 92–95 (NVSS), 110–118 (KHGNRAVSG), and Ser-122 contribute to the 5-phospho-alpha-D-ribose 1-diphosphate site. Anthranilate is bound at residue Gly-82. Position 94 (Ser-94) interacts with Mg(2+). Asn-113 contributes to the anthranilate binding site. Arg-168 provides a ligand contact to anthranilate. Positions 227 and 228 each coordinate Mg(2+).

The protein belongs to the anthranilate phosphoribosyltransferase family. In terms of assembly, homodimer. Requires Mg(2+) as cofactor.

It carries out the reaction N-(5-phospho-beta-D-ribosyl)anthranilate + diphosphate = 5-phospho-alpha-D-ribose 1-diphosphate + anthranilate. It functions in the pathway amino-acid biosynthesis; L-tryptophan biosynthesis; L-tryptophan from chorismate: step 2/5. Functionally, catalyzes the transfer of the phosphoribosyl group of 5-phosphorylribose-1-pyrophosphate (PRPP) to anthranilate to yield N-(5'-phosphoribosyl)-anthranilate (PRA). This Pseudomonas paraeruginosa (strain DSM 24068 / PA7) (Pseudomonas aeruginosa (strain PA7)) protein is Anthranilate phosphoribosyltransferase.